Reading from the N-terminus, the 283-residue chain is Phosphatidylserine decarboxylase proenzyme (283 aa).

Residues aspartate 89, histidine 146, and serine 249 each act as charge relay system; for autoendoproteolytic cleavage activity in the active site. Catalysis depends on serine 249, which acts as the Schiff-base intermediate with substrate; via pyruvic acid; for decarboxylase activity. Serine 249 is modified (pyruvic acid (Ser); by autocatalysis).

Belongs to the phosphatidylserine decarboxylase family. PSD-B subfamily. Prokaryotic type I sub-subfamily. As to quaternary structure, heterodimer of a large membrane-associated beta subunit and a small pyruvoyl-containing alpha subunit. Pyruvate is required as a cofactor. Is synthesized initially as an inactive proenzyme. Formation of the active enzyme involves a self-maturation process in which the active site pyruvoyl group is generated from an internal serine residue via an autocatalytic post-translational modification. Two non-identical subunits are generated from the proenzyme in this reaction, and the pyruvate is formed at the N-terminus of the alpha chain, which is derived from the carboxyl end of the proenzyme. The autoendoproteolytic cleavage occurs by a canonical serine protease mechanism, in which the side chain hydroxyl group of the serine supplies its oxygen atom to form the C-terminus of the beta chain, while the remainder of the serine residue undergoes an oxidative deamination to produce ammonia and the pyruvoyl prosthetic group on the alpha chain. During this reaction, the Ser that is part of the protease active site of the proenzyme becomes the pyruvoyl prosthetic group, which constitutes an essential element of the active site of the mature decarboxylase.

It is found in the cell membrane. The catalysed reaction is a 1,2-diacyl-sn-glycero-3-phospho-L-serine + H(+) = a 1,2-diacyl-sn-glycero-3-phosphoethanolamine + CO2. It functions in the pathway phospholipid metabolism; phosphatidylethanolamine biosynthesis; phosphatidylethanolamine from CDP-diacylglycerol: step 2/2. Catalyzes the formation of phosphatidylethanolamine (PtdEtn) from phosphatidylserine (PtdSer). The sequence is that of Phosphatidylserine decarboxylase proenzyme from Legionella pneumophila subsp. pneumophila (strain Philadelphia 1 / ATCC 33152 / DSM 7513).